Reading from the N-terminus, the 1167-residue chain is Rhoptry neck protein 2-like protein 2 (1167 aa).

The signal sequence occupies residues 1–20; that stretch reads MSSNLAFLSLSLAESTASLG. At 21–977 the chain is on the cytoplasmic side; it reads KSLEETRTRL…WVAKRSRSRK (957 aa). Positions 55 to 94 are disordered; it reads GPGLSVEGKQTEQMSRKSAEDTRASSLSSDPDDGRAAQLA. Residues 68–77 show a composition bias toward basic and acidic residues; the sequence is MSRKSAEDTR. A helical membrane pass occupies residues 978 to 998; it reads LAIVSVLSLGLIFAYTLLSAL. At 999–1167 the chain is on the extracellular side; the sequence is DIAQFLTDSG…TPQRAQDGSR (169 aa). A disulfide bridge links Cys-1015 with Cys-1026.

The protein belongs to the apicomplexan parasites RON2 family.

It localises to the secreted. It is found in the host cell membrane. Its function is as follows. May play a role in host cell invasion. This is Rhoptry neck protein 2-like protein 2 (RON2L2) from Toxoplasma gondii (strain ATCC 50611 / Me49).